A 716-amino-acid polypeptide reads, in one-letter code: Inhibitor of nuclear factor kappa-B kinase subunit epsilon (716 aa).

One can recognise a Protein kinase domain in the interval 9–315; it reads WHTDDLLGQG…LQRVVVHVFS (307 aa). 15–23 is an ATP binding site; sequence LGQGATASV. Lys-30 is covalently cross-linked (Glycyl lysine isopeptide (Lys-Gly) (interchain with G-Cter in ubiquitin)). Residue Lys-38 participates in ATP binding. Asp-135 serves as the catalytic Proton acceptor. The residue at position 172 (Ser-172) is a Phosphoserine; by autocatalysis and IKKB. Lys-231 is covalently cross-linked (Glycyl lysine isopeptide (Lys-Gly) (interchain with G-Cter in SUMO1)). The interval 383–647 is interaction with DDX3X; it reads STAIPKGLAF…VQESLSKLLE (265 aa). Residue Lys-401 forms a Glycyl lysine isopeptide (Lys-Gly) (interchain with G-Cter in ubiquitin) linkage. The interval 436 to 457 is leucine-zipper; it reads QELMFRGLHWVMEVLQATCRRT. Thr-501 bears the Phosphothreonine mark. Ser-664 carries the post-translational modification Phosphoserine.

Belongs to the protein kinase superfamily. Ser/Thr protein kinase family. I-kappa-B kinase subfamily. In terms of assembly, homodimer. Interacts with MAVS/IPS1. Interacts (via protein kinase domain) with TTLL12 (via N-terminus); the interaction prevents MAVS binding to IKBKE. Interacts with the adapter proteins AZI2/NAP1, TANK and TBKBP1/SINTBAD. Interacts with SIKE1. Interacts with TICAM1/TRIF, IRF3 and RIGI; interactions are disrupted by the interaction between IKBKE and SIKE1. Interacts with TOPORS; induced by DNA damage. Interacts with CYLD. Interacts (when polyubiquitinated) with IKBKB, IKBKG and MYD88. Interacts with IFIH1. Interacts with DDX3X; the interaction may be induced upon virus infection. Interacts with TRIM6 (via SPRY box). Interacts with unanchored K48-linked polyubiquitin chains; this leads to IKBKE activation. Interacts with TBK1. Interacts with FKBP5. (Microbial infection) Interacts (via Protein kinase domain) with arenavirus protein N; the interaction inhibits IKBKE kinase function. As to quaternary structure, (Microbial infection) Interacts with Ebola virus protein VP35; the interaction leads to inhibition of cellular antiviral response by blocking necessary interactions between the IKBKE and MAVS/IPS as well as its substrates IRF3 and IRF7. In terms of assembly, (Microbial infection) Interacts with Severe fever with thrombocytopenia virus (SFTSV) NSs; this interaction this interaction sequesters IKBKE in NSs-induced cytoplasmic inclusion bodies thereby inhibiting the IFN responses. (Microbial infection) Interacts with human T-cell leukemia virus 1/HTLV-1 protein HBZ. As to quaternary structure, (Microbial infection) Interacts with Epstein-Barr virus (EBV) protein NEC2/BFRF1; this interaction inhibits IKBKE kinase activity and IRF3 nuclear translocation. Post-translationally, autophosphorylated and phosphorylated by IKBKB/IKKB. Phosphorylation at Ser-172 is enhanced by the interaction with DDX3X. Phosphorylated at Thr-501 upon IFN activation. Sumoylation by TOPORS upon DNA damage is required for protection of cells against DNA damage-induced cell death. Desumoylated by SENP1. In terms of processing, 'Lys-63'-linked polyubiquitinated at Lys-30 and Lys-401 by TRAF2:BIRC2 and TRAF2:BIRC3 complexes. Ubiquitination is induced by LPS, TNFA and interleukin-1 and required for full kinase activity and KF-kappa-B pathway activation. In terms of tissue distribution, highly expressed in spleen followed by thymus, peripheral blood leukocytes, pancreas, placenta. Weakly expressed in lung, kidney, prostate, ovary and colon.

Its subcellular location is the cytoplasm. It is found in the nucleus. The protein localises to the PML body. The enzyme catalyses L-seryl-[I-kappa-B protein] + ATP = O-phospho-L-seryl-[I-kappa-B protein] + ADP + H(+). In terms of biological role, serine/threonine kinase that plays an essential role in regulating inflammatory responses to viral infection, through the activation of the type I IFN, NF-kappa-B and STAT signaling. Also involved in TNFA and inflammatory cytokines, like Interleukin-1, signaling. Following activation of viral RNA sensors, such as RIG-I-like receptors, associates with DDX3X and phosphorylates interferon regulatory factors (IRFs), IRF3 and IRF7, as well as DDX3X. This activity allows subsequent homodimerization and nuclear translocation of the IRF3 leading to transcriptional activation of pro-inflammatory and antiviral genes including IFNB. In order to establish such an antiviral state, IKBKE forms several different complexes whose composition depends on the type of cell and cellular stimuli. Thus, several scaffolding molecules including IPS1/MAVS, TANK, AZI2/NAP1 or TBKBP1/SINTBAD can be recruited to the IKBKE-containing-complexes. Activated by polyubiquitination in response to TNFA and interleukin-1, regulates the NF-kappa-B signaling pathway through, at least, the phosphorylation of CYLD. Phosphorylates inhibitors of NF-kappa-B thus leading to the dissociation of the inhibitor/NF-kappa-B complex and ultimately the degradation of the inhibitor. In addition, is also required for the induction of a subset of ISGs which displays antiviral activity, may be through the phosphorylation of STAT1 at 'Ser-708'. Phosphorylation of STAT1 at 'Ser-708' also seems to promote the assembly and DNA binding of ISGF3 (STAT1:STAT2:IRF9) complexes compared to GAF (STAT1:STAT1) complexes, in this way regulating the balance between type I and type II IFN responses. Protects cells against DNA damage-induced cell death. Also plays an important role in energy balance regulation by sustaining a state of chronic, low-grade inflammation in obesity, wich leads to a negative impact on insulin sensitivity. Phosphorylates AKT1. This Homo sapiens (Human) protein is Inhibitor of nuclear factor kappa-B kinase subunit epsilon (IKBKE).